A 698-amino-acid chain; its full sequence is Trafficking protein particle complex III-specific subunit 85 (698 aa).

Disordered regions lie at residues 82 to 125 (VGQH…LFQR) and 678 to 698 (VDSAPRPSEKNLTRTSVSFIG). Basic and acidic residues predominate over residues 678-689 (VDSAPRPSEKNL).

The protein belongs to the TRS85 family. As to quaternary structure, part of the multisubunit TRAPP (transport protein particle) III complex composed of BET3, BET5, TRS20, TRS23, TRS31, TRS33 and TRS85.

It localises to the preautophagosomal structure. Its function is as follows. Specific subunit of the TRAPP III complex that acts as an autophagy-specific guanine nucleotide exchange factor (GEF) for YPT1. TRS85 directs the TRAPP III complex to the phagophore assembly site (PAS) that is involved in autophagosome formation. Required for membrane expansion during autophagy and the CVT pathway. Required for sporulation. Has a role late in meiosis following DNA replication. The sequence is that of Trafficking protein particle complex III-specific subunit 85 (TRS85) from Saccharomyces cerevisiae (strain ATCC 204508 / S288c) (Baker's yeast).